Reading from the N-terminus, the 286-residue chain is General stress protein A (286 aa).

UDP is bound by residues Cys-12–Tyr-17 and Asp-111–Cys-112. 3 residues coordinate Mn(2+): Asp-111, Asp-113, and His-247. His-247–Lys-253 serves as a coordination point for UDP.

The protein belongs to the glycosyltransferase 8 family.

The polypeptide is General stress protein A (gspA) (Bacillus subtilis (strain 168)).